Here is an 894-residue protein sequence, read N- to C-terminus: Translation factor GUF1 homolog, mitochondrial (894 aa).

Residues 157 to 189 are disordered; it reads EDEGLDGGPPPGMEAKKSSSSSSSNNVHSNCSD. Positions 174–188 are enriched in low complexity; that stretch reads SSSSSSSNNVHSNCS. The 178-residue stretch at 199–376 folds into the tr-type G domain; that stretch reads ENIRNFCILA…RIVSEIPSPA (178 aa). GTP is bound by residues 208–215, 269–273, and 323–326; these read AHIDSGKS, DTPGH, and NKID. Residues 649 to 674 are disordered; the sequence is DHDDCNDNGGSNSDDRSDRSGKNPPD.

The protein belongs to the TRAFAC class translation factor GTPase superfamily. Classic translation factor GTPase family. LepA subfamily.

Its subcellular location is the mitochondrion inner membrane. The enzyme catalyses GTP + H2O = GDP + phosphate + H(+). Promotes mitochondrial protein synthesis. May act as a fidelity factor of the translation reaction, by catalyzing a one-codon backward translocation of tRNAs on improperly translocated ribosomes. Binds to mitochondrial ribosomes in a GTP-dependent manner. The sequence is that of Translation factor GUF1 homolog, mitochondrial from Plasmodium knowlesi (strain H).